The primary structure comprises 1843 residues: Zinc finger protein 142 (1843 aa).

2 C2H2-type zinc fingers span residues 103–127 (YFCE…TETH) and 164–186 (LPCP…FKIH). Positions 294 to 357 (PAAKLPPGHR…LEGHVGSGTE (64 aa)) are disordered. Residues 318–329 (SAEEEDAEEEES) are compositionally biased toward acidic residues. The span at 330 to 340 (VTQKDSQKVMD) shows a compositional bias: basic and acidic residues. The residue at position 354 (serine 354) is a Phosphoserine. Residues 363–385 (HMCPECKRCFKKRTHLVEHLHLH) form a C2H2-type 3 zinc finger. The C2H2-type 4; degenerate zinc-finger motif lies at 391-413 (LQCPNCQKFFTSKSKLKTHLLRE). 7 consecutive C2H2-type zinc fingers follow at residues 453 to 475 (YACP…LKSH), 543 to 566 (FHCP…KQGH), 601 to 623 (HQCS…MLLH), 629 to 651 (HKCE…MLTH), 657 to 679 (YMCT…MRKH), 685 to 707 (YQCN…KLRH), and 744 to 767 (YPCR…NCKH). Lysine 794 is covalently cross-linked (Glycyl lysine isopeptide (Lys-Gly) (interchain with G-Cter in SUMO2)). Disordered stretches follow at residues 819–888 (QCLA…LGEV) and 1103–1177 (PKPV…TGTS). Positions 837–846 (PEREDREHEI) are enriched in basic and acidic residues. The segment covering 1157 to 1167 (LPTPSDFPTSP) has biased composition (pro residues). Positions 1168 to 1177 (PENSLPTGTS) are enriched in polar residues. 9 C2H2-type zinc fingers span residues 1331 to 1354 (LQCG…RLKH), 1388 to 1411 (IPCS…LRVH), 1446 to 1469 (FSCT…LRRH), 1514 to 1537 (LECG…RQHH), 1608 to 1630 (YKCT…SRIH), 1636 to 1658 (YHCH…MRIH), 1664 to 1686 (YLCP…MTKH), 1692 to 1715 (YQCP…ETRH), and 1721 to 1743 (FMCE…LRKH). Glycyl lysine isopeptide (Lys-Gly) (interchain with G-Cter in SUMO2) cross-links involve residues lysine 1353 and lysine 1402. Residue lysine 1747 forms a Glycyl lysine isopeptide (Lys-Gly) (interchain with G-Cter in SUMO2) linkage. The C2H2-type 21 zinc-finger motif lies at 1749–1771 (YVCNVCHRAFRWAAGLRHHALTH). A disordered region spans residues 1795–1843 (HVRRHHPDQADPNQGVGKDPTTPTVHLHDVKLEDPSPPAPPAPSTGPEG). The span at 1829–1843 (PSPPAPPAPSTGPEG) shows a compositional bias: pro residues.

It belongs to the krueppel C2H2-type zinc-finger protein family.

The protein resides in the nucleus. In terms of biological role, may be involved in transcriptional regulation. The protein is Zinc finger protein 142 of Mus musculus (Mouse).